The primary structure comprises 134 residues: Probable glycine cleavage system H protein (134 aa).

Residues 29–110 (TVLVGITDYA…PYEAWIAKIK (82 aa)) enclose the Lipoyl-binding domain. At Lys-70 the chain carries N6-lipoyllysine.

It belongs to the GcvH family. In terms of assembly, the glycine cleavage system is composed of four proteins: P, T, L and H. (R)-lipoate serves as cofactor.

Its function is as follows. The glycine cleavage system catalyzes the degradation of glycine. The H protein shuttles the methylamine group of glycine from the P protein to the T protein. This is Probable glycine cleavage system H protein from Pyrococcus furiosus (strain ATCC 43587 / DSM 3638 / JCM 8422 / Vc1).